The following is a 508-amino-acid chain: Pancreatic alpha-amylase 2a5 (508 aa).

Residues 1–15 (MKFVLLLSLIGFCWA) form the signal peptide. Glutamine 16 is modified (pyrrolidone carboxylic acid). Cystine bridges form between cysteine 43–cysteine 101, cysteine 85–cysteine 130, and cysteine 156–cysteine 172. Ca(2+) contacts are provided by asparagine 115, arginine 170, and aspartate 179. Residue arginine 207 coordinates chloride. Catalysis depends on aspartate 209, which acts as the Nucleophile. Histidine 213 is a Ca(2+) binding site. Catalysis depends on glutamate 245, which acts as the Proton donor. Asparagine 310 and arginine 349 together coordinate chloride. Disulfide bonds link cysteine 390/cysteine 396 and cysteine 462/cysteine 474.

This sequence belongs to the glycosyl hydrolase 13 family. As to quaternary structure, monomer. Ca(2+) serves as cofactor. Requires chloride as cofactor.

It is found in the secreted. The protein localises to the extracellular space. It catalyses the reaction Endohydrolysis of (1-&gt;4)-alpha-D-glucosidic linkages in polysaccharides containing three or more (1-&gt;4)-alpha-linked D-glucose units.. The polypeptide is Pancreatic alpha-amylase 2a5 (Mus musculus (Mouse)).